The following is a 327-amino-acid chain: Solute-binding protein SPO1773 (327 aa).

The first 26 residues, 1–26 (MTISFKGLARGVACAALVLAALPAAA), serve as a signal peptide directing secretion. 3-hydroxybenzoate-binding positions include 39-41 (HTW), arginine 150, 170-172 (RIT), and aspartate 211.

It belongs to the bacterial solute-binding protein 7 family. The complex is comprised of an extracytoplasmic solute-binding protein and a heteromeric permease formed by two transmembrane proteins.

Its subcellular location is the periplasm. In terms of biological role, solute-binding protein that binds 3,4-dihydroxybenzoate and 3-hydroxybenzoate (in vitro). Probably part of a tripartite ATP-independent periplasmic (TRAP) transport system that mediates solute transport into the cytoplasm. This chain is Solute-binding protein SPO1773, found in Ruegeria pomeroyi (strain ATCC 700808 / DSM 15171 / DSS-3) (Silicibacter pomeroyi).